A 459-amino-acid chain; its full sequence is ATP synthase subunit beta (459 aa).

Position 148–155 (148–155) interacts with ATP; the sequence is GGAGVGKT.

Belongs to the ATPase alpha/beta chains family. In terms of assembly, F-type ATPases have 2 components, CF(1) - the catalytic core - and CF(0) - the membrane proton channel. CF(1) has five subunits: alpha(3), beta(3), gamma(1), delta(1), epsilon(1). CF(0) has three main subunits: a(1), b(2) and c(9-12). The alpha and beta chains form an alternating ring which encloses part of the gamma chain. CF(1) is attached to CF(0) by a central stalk formed by the gamma and epsilon chains, while a peripheral stalk is formed by the delta and b chains.

It is found in the cell inner membrane. It carries out the reaction ATP + H2O + 4 H(+)(in) = ADP + phosphate + 5 H(+)(out). Its function is as follows. Produces ATP from ADP in the presence of a proton gradient across the membrane. The catalytic sites are hosted primarily by the beta subunits. The chain is ATP synthase subunit beta from Ruthia magnifica subsp. Calyptogena magnifica.